The following is an 816-amino-acid chain: Phosphatidylinositol 4-kinase beta (816 aa).

Disordered stretches follow at residues 1–28 (MGDT…NGGS), 93–120 (PPTG…RRRR), and 249–318 (HRKR…SFSS). Residue glycine 2 is modified to N-acetylglycine. The segment at 2-68 (GDTVVAPAPL…VKLSHGGVAS (67 aa)) is interaction with ACBD3. Residues 49-242 (QKACQEVLQK…GTKLRRLILS (194 aa)) enclose the PIK helical domain. At serine 258 the chain carries Phosphoserine. At threonine 263 the chain carries Phosphothreonine. Phosphoserine is present on residues serine 266, serine 275, serine 277, serine 284, serine 294, serine 428, and serine 511. The segment covering 278–294 (DATASISLSSSLKRTAS) has biased composition (low complexity). Threonine 517 and threonine 519 each carry phosphothreonine. Residues 535–801 (EPWQEKVRRI…MVDGSMRSIT (267 aa)) enclose the PI3K/PI4K catalytic domain. A G-loop region spans residues 541–547 (VRRIREG). The tract at residues 668-676 (QVKDRHNGN) is catalytic loop. Residues 687–711 (HIDFGFILSSSPRNLGFETSAFKLT) are activation loop.

Belongs to the PI3/PI4-kinase family. Type III PI4K subfamily. In terms of assembly, interacts with ARF1 and ARF3 in the Golgi complex, but not with ARF4, ARF5 or ARF6. Interacts with NCS1/FREQ in a calcium-independent manner. Interacts with CALN1/CABP8 and CALN2/CABP7; in a calcium-dependent manner; this interaction competes with NCS1/FREQ binding. Interacts with ACBD3. Interacts with ARMH3, YWHAB, YWHAE, YWHAG, YWHAH, YWHAQ, YWHAZ and SFN. Interacts with GGA2 (via VHS domain); the interaction is important for PI4KB location at the Golgi apparatus membrane. Interacts with ATG9A. The cofactor is Mg(2+). It depends on Mn(2+) as a cofactor.

It is found in the endomembrane system. The protein resides in the mitochondrion outer membrane. It localises to the rough endoplasmic reticulum membrane. Its subcellular location is the golgi apparatus. The protein localises to the golgi apparatus membrane. It carries out the reaction a 1,2-diacyl-sn-glycero-3-phospho-(1D-myo-inositol) + ATP = a 1,2-diacyl-sn-glycero-3-phospho-(1D-myo-inositol 4-phosphate) + ADP + H(+). Inhibited by wortmannin. Increased kinase activity upon interaction with NCS1/FREQ. Functionally, phosphorylates phosphatidylinositol (PI) in the first committed step in the production of the second messenger inositol-1,4,5,-trisphosphate (PIP). May regulate Golgi disintegration/reorganization during mitosis, possibly via its phosphorylation. Involved in Golgi-to-plasma membrane trafficking. May play an important role in the inner ear development. This is Phosphatidylinositol 4-kinase beta (PI4KB) from Rhinolophus ferrumequinum (Greater horseshoe bat).